A 317-amino-acid polypeptide reads, in one-letter code: 1-phosphofructokinase (317 aa).

ATP contacts are provided by residues 223-228 and 254-255; these read SMGAEG and GD. The active-site Proton acceptor is Asp-255.

Belongs to the carbohydrate kinase PfkB family.

The enzyme catalyses beta-D-fructose 1-phosphate + ATP = beta-D-fructose 1,6-bisphosphate + ADP + H(+). Its function is as follows. Catalyzes the ATP-dependent phosphorylation of fructose-l-phosphate to fructose-l,6-bisphosphate. The polypeptide is 1-phosphofructokinase (Vibrio cholerae serotype O1 (strain ATCC 39315 / El Tor Inaba N16961)).